A 739-amino-acid chain; its full sequence is Phosphoribosylformylglycinamidine synthase subunit PurL (739 aa).

H54 is a catalytic residue. ATP-binding residues include Y57 and K96. Residue E98 coordinates Mg(2+). Substrate is bound by residues 99 to 102 (SHNH) and R121. Residue H100 is the Proton acceptor of the active site. D122 provides a ligand contact to Mg(2+). Q245 is a binding site for substrate. Residue D273 coordinates Mg(2+). Substrate is bound at residue 317 to 319 (ESQ). D500 and G537 together coordinate ATP. N538 contacts Mg(2+). A substrate-binding site is contributed by S540.

Belongs to the FGAMS family. As to quaternary structure, monomer. Part of the FGAM synthase complex composed of 1 PurL, 1 PurQ and 2 PurS subunits.

It is found in the cytoplasm. It carries out the reaction N(2)-formyl-N(1)-(5-phospho-beta-D-ribosyl)glycinamide + L-glutamine + ATP + H2O = 2-formamido-N(1)-(5-O-phospho-beta-D-ribosyl)acetamidine + L-glutamate + ADP + phosphate + H(+). It participates in purine metabolism; IMP biosynthesis via de novo pathway; 5-amino-1-(5-phospho-D-ribosyl)imidazole from N(2)-formyl-N(1)-(5-phospho-D-ribosyl)glycinamide: step 1/2. Functionally, part of the phosphoribosylformylglycinamidine synthase complex involved in the purines biosynthetic pathway. Catalyzes the ATP-dependent conversion of formylglycinamide ribonucleotide (FGAR) and glutamine to yield formylglycinamidine ribonucleotide (FGAM) and glutamate. The FGAM synthase complex is composed of three subunits. PurQ produces an ammonia molecule by converting glutamine to glutamate. PurL transfers the ammonia molecule to FGAR to form FGAM in an ATP-dependent manner. PurS interacts with PurQ and PurL and is thought to assist in the transfer of the ammonia molecule from PurQ to PurL. The sequence is that of Phosphoribosylformylglycinamidine synthase subunit PurL from Bacillus cereus (strain ZK / E33L).